The following is a 554-amino-acid chain: MAYYRTPHDVTALPAWQALQQHRDAMQGFSMREAFAADAQRFDQFSLSCCGLFLDYSKNLITEQSRDLLVNLANEVGLQDAIKSMFAGEIINASEGRPVLHTALRRPVGDKLSVNGVNVMPEVHKVLNQITELVGRIHDGLWRGYSEKPITDVVNIGIGGSFLGPELVSEALLPYAQRGVRCHYLANIDGSEFHELSANLRAETTLFIVSSKSFNTLETLKNAMAARTWYLAQGGSEAELYRHFIAVSSNKAAAVAFGIREENIFPMWDWVGGRYSLWSAIGLPIALAIGTANFKELLSGAYTMDQHFQTAPFDKNMPVLLALLGVWYGNFWGANSHAILPYDHYLRNITKHLQQLDMESNGKSVLQDGTPVKTDTGPVIWGGVGCNGQHAYHQLLHQGTQLIPADFIVPVVSFNPVADHHQWLYANCLSQSQALMLGKTREEAEAELRGKGLNEADIEKLAPHKVIPGNRPSNTLVVERISPRRLGALVAMYEHKVFVQSVIWGINAFDQWGVELGKELGKGVYQRLVGSLEESAEDGSTQGLINYFRGRHRG.

Catalysis depends on Glu-359, which acts as the Proton donor. Active-site residues include His-390 and Lys-518.

Belongs to the GPI family.

The protein localises to the cytoplasm. It carries out the reaction alpha-D-glucose 6-phosphate = beta-D-fructose 6-phosphate. The protein operates within carbohydrate biosynthesis; gluconeogenesis. Its pathway is carbohydrate degradation; glycolysis; D-glyceraldehyde 3-phosphate and glycerone phosphate from D-glucose: step 2/4. In terms of biological role, catalyzes the reversible isomerization of glucose-6-phosphate to fructose-6-phosphate. The chain is Glucose-6-phosphate isomerase from Pseudomonas putida (strain GB-1).